Reading from the N-terminus, the 119-residue chain is Ribonuclease P protein component (119 aa).

This sequence belongs to the RnpA family. Consists of a catalytic RNA component (M1 or rnpB) and a protein subunit.

It carries out the reaction Endonucleolytic cleavage of RNA, removing 5'-extranucleotides from tRNA precursor.. In terms of biological role, RNaseP catalyzes the removal of the 5'-leader sequence from pre-tRNA to produce the mature 5'-terminus. It can also cleave other RNA substrates such as 4.5S RNA. The protein component plays an auxiliary but essential role in vivo by binding to the 5'-leader sequence and broadening the substrate specificity of the ribozyme. This chain is Ribonuclease P protein component, found in Yersinia enterocolitica serotype O:8 / biotype 1B (strain NCTC 13174 / 8081).